A 192-amino-acid chain; its full sequence is Phosphomevalonate kinase (192 aa).

ATP is bound by residues 17 to 23 and Arg141; that span reads KRKSGKD. Asn170 lines the substrate pocket. Positions 171 and 180 each coordinate ATP.

In terms of assembly, monomer.

The protein localises to the cytoplasm. Its subcellular location is the cytosol. The catalysed reaction is (R)-5-phosphomevalonate + ATP = (R)-5-diphosphomevalonate + ADP. Its pathway is isoprenoid biosynthesis; isopentenyl diphosphate biosynthesis via mevalonate pathway; isopentenyl diphosphate from (R)-mevalonate: step 2/3. Its function is as follows. Catalyzes the reversible ATP-dependent phosphorylation of mevalonate 5-phosphate to produce mevalonate diphosphate and ADP, a key step in the mevalonic acid mediated biosynthesis of isopentenyl diphosphate and other polyisoprenoid metabolites. This is Phosphomevalonate kinase (PMVK) from Bos taurus (Bovine).